The following is a 93-amino-acid chain: SH3 domain-binding glutamic acid-rich-like protein 3 (93 aa).

Residue serine 2 is modified to N-acetylserine. One can recognise a Glutaredoxin domain in the interval 2–93 (SGLRVYSTSV…DTLQEFLKLA (92 aa)). O-linked (GalNAc...) threonine glycosylation is present at threonine 9.

This sequence belongs to the SH3BGR family. As to quaternary structure, homodimer. Interacts with MYO1C (via its IQ motifs); the interaction is dependent on calcium and takes place at membrane ruffles. Post-translationally, may be glycosylated.

It is found in the cytoplasm. The protein resides in the cytosol. It localises to the cell projection. Its subcellular location is the ruffle membrane. The protein localises to the nucleus. Could act as a modulator of glutaredoxin biological activity. May play a role in cytoskeleton organization. This is SH3 domain-binding glutamic acid-rich-like protein 3 (Sh3bgrl3) from Mus musculus (Mouse).